Reading from the N-terminus, the 64-residue chain is Protein YnhH (64 aa).

In Escherichia coli (strain K12), this protein is Protein YnhH.